Consider the following 438-residue polypeptide: Asparagine--tRNA ligase (438 aa).

It belongs to the class-II aminoacyl-tRNA synthetase family. Homodimer.

The protein localises to the cytoplasm. The catalysed reaction is tRNA(Asn) + L-asparagine + ATP = L-asparaginyl-tRNA(Asn) + AMP + diphosphate + H(+). This Thermus thermophilus (strain ATCC BAA-163 / DSM 7039 / HB27) protein is Asparagine--tRNA ligase.